We begin with the raw amino-acid sequence, 125 residues long: Small ribosomal subunit protein uS13 (125 aa).

Positions 90 to 125 (QRHRKGLPVRGQRTKTNARTRKGPKRTVAGKKKATK) are disordered.

This sequence belongs to the universal ribosomal protein uS13 family. Part of the 30S ribosomal subunit. Forms a loose heterodimer with protein S19. Forms two bridges to the 50S subunit in the 70S ribosome.

Its function is as follows. Located at the top of the head of the 30S subunit, it contacts several helices of the 16S rRNA. In the 70S ribosome it contacts the 23S rRNA (bridge B1a) and protein L5 of the 50S subunit (bridge B1b), connecting the 2 subunits; these bridges are implicated in subunit movement. Contacts the tRNAs in the A and P-sites. The chain is Small ribosomal subunit protein uS13 from Bifidobacterium adolescentis (strain ATCC 15703 / DSM 20083 / NCTC 11814 / E194a).